The following is a 381-amino-acid chain: Transcription termination factor 4, mitochondrial (381 aa).

A mitochondrion-targeting transit peptide spans Met1–Lys42. 5 MTERF repeats span residues Cys142–Gly172, Lys177–Lys204, Val209–Phe239, His245–Arg270, and Leu290–Lys318. The interval Val310 to Ser327 is dimerization with NSUN4. Positions Arg322–Glu381 are disordered. The span at Asp340–Glu381 shows a compositional bias: acidic residues.

It belongs to the mTERF family. Heterodimer with NSUN4; this interaction may be required for NSUN4 recruitment to the mitochondrial large ribosomal subunit. Post-translationally, the mature mitochondrial protein exists in 2 forms differing at the level of their N-terminus, one is starting at residue 43 and the other at residue 48.

The protein localises to the mitochondrion. Functionally, regulator of mitochondrial ribosome biogenesis and translation. Binds to mitochondrial ribosomal RNAs 16S, 12S and 7S and targets NSUN4 RNA methyltransferase to the mitochondrial large ribosomal subunit (39S). The chain is Transcription termination factor 4, mitochondrial (MTERF4) from Homo sapiens (Human).